A 1014-amino-acid polypeptide reads, in one-letter code: Beta-galactosidase (1014 aa).

Glutamate 460 serves as the catalytic Proton donor. Glutamate 527 serves as the catalytic Nucleophile.

It belongs to the glycosyl hydrolase 2 family.

It catalyses the reaction Hydrolysis of terminal non-reducing beta-D-galactose residues in beta-D-galactosides.. The polypeptide is Beta-galactosidase (lacZ) (Halalkalibacterium halodurans (strain ATCC BAA-125 / DSM 18197 / FERM 7344 / JCM 9153 / C-125) (Bacillus halodurans)).